The sequence spans 113 residues: UPF0102 protein CHU_0465 (113 aa).

It belongs to the UPF0102 family.

This Cytophaga hutchinsonii (strain ATCC 33406 / DSM 1761 / CIP 103989 / NBRC 15051 / NCIMB 9469 / D465) protein is UPF0102 protein CHU_0465.